Here is a 1127-residue protein sequence, read N- to C-terminus: Collagen alpha-2(I) chain (1127 aa).

Positions 1 to 16 are enriched in pro residues; the sequence is DGKPGLPGPAGPPGPP. The interval 1–1017 is disordered; sequence DGKPGLPGPA…GPAGPAGGGY (1017 aa). Composition is skewed to low complexity over residues 171 to 191, 221 to 230, and 237 to 258; these read AGPA…AAGP, EPGPNGAVGP, and PGNN…AGAP. Over residues 260-270 the composition is skewed to pro residues; sequence FPGPRGGPGPQ. The segment covering 272–282 has biased composition (low complexity); sequence PQGAAGQRGLA. A compositionally biased stretch (gly residues) spans 289-298; that stretch reads GVKGDGGPKG. 4 stretches are compositionally biased toward low complexity: residues 326 to 345, 355 to 398, 436 to 449, and 461 to 473; these read ATGP…RGMP, AAGP…AGPA, APGP…TGAT, and QGAA…QGLP. Positions 474 to 483 are enriched in gly residues; the sequence is GPAGGAGEAG. Positions 508-518 are enriched in low complexity; the sequence is NPGAAGASGPQ. Positions 531–568 are enriched in gly residues; the sequence is GTDGGKGEPGAAGAAGGPGHQGPGGMPGERGAAGGPGG. Residues 569-580 are compositionally biased toward basic and acidic residues; the sequence is KGEKGEAGHRGP. Composition is skewed to low complexity over residues 611-625 and 634-647; these read SGSF…ARGA and PAGA…PGAD. Gly residues predominate over residues 657–666; the sequence is GPSGGKGESG. 3 stretches are compositionally biased toward low complexity: residues 667–692, 703–730, and 758–778; these read PSGP…TGAR, FPGA…PAGK, and SGEK…PLGL. Residues 792 to 801 are compositionally biased toward gly residues; it reads GSPGGAGAVG. 2 stretches are compositionally biased toward low complexity: residues 802–824 and 860–872; these read EAGR…LGLP and PGSS…AGAP. The span at 876–897 shows a compositional bias: gly residues; the sequence is GPSGGAGRPGNRGESGPGGAAG. The segment covering 898 to 913 has biased composition (low complexity); that stretch reads AVGPAGARGAAGPSGP. Over residues 914-928 the composition is skewed to basic and acidic residues; that stretch reads RGEKGVAGEKGERGM. Composition is skewed to low complexity over residues 937–956 and 986–997; these read LQGM…AGPN and PGARGPPGYVGP. Pro residues predominate over residues 998 to 1010; the sequence is AGPPGXPGLPGPA. The 35-residue stretch at 1093–1127 folds into the Fibrillar collagen NC1 domain; it reads RTNKPSRLPLLDLAPLDLGGADQEFGLDLGPVCFK.

This sequence belongs to the fibrillar collagen family.

The protein resides in the secreted. The protein localises to the extracellular space. Its subcellular location is the extracellular matrix. This is Collagen alpha-2(I) chain from Epinephelus marginatus (Dusky grouper).